The chain runs to 510 residues: ATP synthase subunit alpha (510 aa).

169–176 (GDRQTGKT) is a binding site for ATP.

The protein belongs to the ATPase alpha/beta chains family. In terms of assembly, F-type ATPases have 2 components, CF(1) - the catalytic core - and CF(0) - the membrane proton channel. CF(1) has five subunits: alpha(3), beta(3), gamma(1), delta(1), epsilon(1). CF(0) has three main subunits: a(1), b(2) and c(9-12). The alpha and beta chains form an alternating ring which encloses part of the gamma chain. CF(1) is attached to CF(0) by a central stalk formed by the gamma and epsilon chains, while a peripheral stalk is formed by the delta and b chains.

The protein localises to the cell inner membrane. The catalysed reaction is ATP + H2O + 4 H(+)(in) = ADP + phosphate + 5 H(+)(out). Functionally, produces ATP from ADP in the presence of a proton gradient across the membrane. The alpha chain is a regulatory subunit. In Anaeromyxobacter dehalogenans (strain 2CP-C), this protein is ATP synthase subunit alpha.